A 598-amino-acid chain; its full sequence is MNERIKNKLALLPDQPGCYLMKDKNGTIIYVGKAKILKNRVRSYFRGSHDTKTERLVSEIDDFEYIVTESNIEALLLEINLIHKNNPKYNIMLKDDKTYPFIKITNEKYPRLMITRKVLKDKALYFGPYPDVNAANETKKLLDRLFPLRKCNPSQKTPCLYYHLGQCLCPYAFDVDPQVYKDMVEEIKGFLSGGHTEIQDRLQEKMAYAAAHMEFEKAAEFRDQIKAIETVMTRQKMTNVDLIDRDVFGYAVDKGWMCVQVFFVRQGKLIERDVSIFPFYDDASEAFLTFIGQFYQENEHFVPKEVLIPDDIDKESVEALLATKVLQPQRGEKKKLVKLASKNAAVALNEKFDLIVRKQERTIGAVEKLGNAMNIPAPIRIEAFDNSNIMGTNPVSAMVVFIDGRPAKNEYRKYKIKTVQGPDDYASMREVIYRRYSRVLKEGLPFPDLILIDGGKGQVDVAKDVLANQLGVDIPVAGLAKNDKHKTSELLFGPNLEVVPLERNSQEFFLLQRIQDEVHRFAITFHRQLRSKNSFASKLDNIEGLGPKRKKNLLKEFKSLKNITAASVEELRKAGLPETVAKNVYRHLHQETTSEIEK.

One can recognise a GIY-YIG domain in the interval 14 to 91 (DQPGCYLMKD…IHKNNPKYNI (78 aa)). The 36-residue stretch at 196-231 (TEIQDRLQEKMAYAAAHMEFEKAAEFRDQIKAIETV) folds into the UVR domain.

This sequence belongs to the UvrC family. In terms of assembly, interacts with UvrB in an incision complex.

Its subcellular location is the cytoplasm. Functionally, the UvrABC repair system catalyzes the recognition and processing of DNA lesions. UvrC both incises the 5' and 3' sides of the lesion. The N-terminal half is responsible for the 3' incision and the C-terminal half is responsible for the 5' incision. This is UvrABC system protein C from Enterococcus faecalis (strain ATCC 700802 / V583).